Here is a 90-residue protein sequence, read N- to C-terminus: MAYKMLQVVLCSTLLIGALGAPFLLEDPANQFLRLKRHVNLQDYWDPDHSSDVWVNTLAKQARETWIALKTTAQYYLDMNTFTFDMSTAQ.

Positions 1-20 are cleaved as a signal peptide; that stretch reads MAYKMLQVVLCSTLLIGALG.

This is an uncharacterized protein from Homo sapiens (Human).